The chain runs to 345 residues: Myb/SANT-like DNA-binding domain-containing protein 4 (345 aa).

Residues 4-77 (LKRKRKSNFS…EVKRRYLDWR (74 aa)) form the Myb-like domain. A Glycyl lysine isopeptide (Lys-Gly) (interchain with G-Cter in SUMO2) cross-link involves residue lysine 9. A Phosphoserine modification is found at serine 106. Glycyl lysine isopeptide (Lys-Gly) (interchain with G-Cter in SUMO2) cross-links involve residues lysine 114 and lysine 142. Residues 141–160 (VKVEEEERDPQSPEFEIEEE) are disordered. Phosphothreonine is present on threonine 188. Residues 203–345 (LLVNIEKQKL…LRIQKEGHLQ (143 aa)) are a coiled coil. Residues lysine 237, lysine 254, and lysine 273 each participate in a glycyl lysine isopeptide (Lys-Gly) (interchain with G-Cter in SUMO2) cross-link.

In Bos taurus (Bovine), this protein is Myb/SANT-like DNA-binding domain-containing protein 4 (MSANTD4).